A 284-amino-acid polypeptide reads, in one-letter code: Bifunctional protein FolD (284 aa).

NADP(+) contacts are provided by residues 165 to 167 and Ser190; that span reads GRS.

Belongs to the tetrahydrofolate dehydrogenase/cyclohydrolase family. As to quaternary structure, homodimer.

It carries out the reaction (6R)-5,10-methylene-5,6,7,8-tetrahydrofolate + NADP(+) = (6R)-5,10-methenyltetrahydrofolate + NADPH. It catalyses the reaction (6R)-5,10-methenyltetrahydrofolate + H2O = (6R)-10-formyltetrahydrofolate + H(+). It functions in the pathway one-carbon metabolism; tetrahydrofolate interconversion. Its function is as follows. Catalyzes the oxidation of 5,10-methylenetetrahydrofolate to 5,10-methenyltetrahydrofolate and then the hydrolysis of 5,10-methenyltetrahydrofolate to 10-formyltetrahydrofolate. The protein is Bifunctional protein FolD of Streptococcus pyogenes serotype M2 (strain MGAS10270).